Consider the following 358-residue polypeptide: Phosphoserine aminotransferase (358 aa).

Arg43 contacts L-glutamate. Pyridoxal 5'-phosphate-binding residues include Trp103, Thr153, Asp172, and Gln195. Residue Lys196 is modified to N6-(pyridoxal phosphate)lysine. 236-237 (NT) is a binding site for pyridoxal 5'-phosphate.

It belongs to the class-V pyridoxal-phosphate-dependent aminotransferase family. SerC subfamily. As to quaternary structure, homodimer. The cofactor is pyridoxal 5'-phosphate.

The protein localises to the cytoplasm. The catalysed reaction is O-phospho-L-serine + 2-oxoglutarate = 3-phosphooxypyruvate + L-glutamate. It carries out the reaction 4-(phosphooxy)-L-threonine + 2-oxoglutarate = (R)-3-hydroxy-2-oxo-4-phosphooxybutanoate + L-glutamate. It participates in amino-acid biosynthesis; L-serine biosynthesis; L-serine from 3-phospho-D-glycerate: step 2/3. The protein operates within cofactor biosynthesis; pyridoxine 5'-phosphate biosynthesis; pyridoxine 5'-phosphate from D-erythrose 4-phosphate: step 3/5. Functionally, catalyzes the reversible conversion of 3-phosphohydroxypyruvate to phosphoserine and of 3-hydroxy-2-oxo-4-phosphonooxybutanoate to phosphohydroxythreonine. The sequence is that of Phosphoserine aminotransferase from Dichelobacter nodosus (strain VCS1703A).